We begin with the raw amino-acid sequence, 273 residues long: Flagellin FljM (273 aa).

It belongs to the bacterial flagellin family. In terms of assembly, in C.crescentus, the flagellar filament is composed of multiple flagellins of 29 kDa; 27 kDa and 25 kDa.

Its subcellular location is the secreted. It localises to the bacterial flagellum. Its function is as follows. Flagellin is the subunit protein which polymerizes to form the filaments of bacterial flagella. The polypeptide is Flagellin FljM (fljM) (Caulobacter vibrioides (strain ATCC 19089 / CIP 103742 / CB 15) (Caulobacter crescentus)).